The chain runs to 472 residues: GTPase Der (472 aa).

EngA-type G domains are found at residues 3–166 (PVIA…PEQE) and 176–349 (IRIG…DSAM). GTP is bound by residues 9–16 (GRPNVGKS), 56–60 (DTGGI), 118–121 (NKID), 182–189 (GRPNVGKS), 229–233 (DTAGV), and 294–297 (NKWD). The KH-like domain maps to 350-434 (AKWSTNQLTT…PIRFEFRSGE (85 aa)). The tract at residues 433–472 (GENPFAGKKNKLSPRQQKKKERLMKHVKKLKHKQKRKKSR) is disordered. Over residues 440-472 (KKNKLSPRQQKKKERLMKHVKKLKHKQKRKKSR) the composition is skewed to basic residues.

This sequence belongs to the TRAFAC class TrmE-Era-EngA-EngB-Septin-like GTPase superfamily. EngA (Der) GTPase family. In terms of assembly, associates with the 50S ribosomal subunit.

Functionally, GTPase that plays an essential role in the late steps of ribosome biogenesis. In Hahella chejuensis (strain KCTC 2396), this protein is GTPase Der.